The primary structure comprises 328 residues: AA9 family lytic polysaccharide monooxygenase A (328 aa).

Positions 1–21 (MPSTKVAALSAVLALASTVAG) are cleaved as a signal peptide. His-22 contacts Cu(2+). The residue at position 22 (His-22) is a Methylhistidine. Cystine bridges form between Cys-77–Cys-199 and Cys-118–Cys-122. Asn-80 carries an N-linked (GlcNAc...) asparagine glycan. Residue His-107 participates in Cu(2+) binding. 2 N-linked (GlcNAc...) asparagine glycosylation sites follow: Asn-121 and Asn-159. Residues His-185 and Gln-194 each contribute to the O2 site. Tyr-196 contributes to the Cu(2+) binding site. Ser-235 and Ser-237 each carry an O-linked (Man...) serine glycan. 2 O-linked (Man...) threonine glycosylation sites follow: Thr-238 and Thr-245.

Belongs to the polysaccharide monooxygenase AA9 family. It depends on Cu(2+) as a cofactor. In terms of processing, the catalytically essential N-terminal histidine His-22 is post-translationally modified by methylation to prevent protonation of the histidine side chain, and protect the critical active site of the enzyme from oxidative damage.

The protein resides in the secreted. The enzyme catalyses [(1-&gt;4)-beta-D-glucosyl]n+m + reduced acceptor + O2 = 4-dehydro-beta-D-glucosyl-[(1-&gt;4)-beta-D-glucosyl]n-1 + [(1-&gt;4)-beta-D-glucosyl]m + acceptor + H2O.. Its function is as follows. Lytic polysaccharide monooxygenase (LPMO) that depolymerizes crystalline and amorphous polysaccharides via the oxidation of scissile alpha- or beta-(1-4)-glycosidic bonds, yielding C1 and C4 oxidation products. Catalysis by LPMOs requires the reduction of the active-site copper from Cu(II) to Cu(I) by a reducing agent and H(2)O(2) or O(2) as a cosubstrate. Shows activity on cellulosic substrates (Avicel, carboxymethylcellulose) and xylan. The sequence is that of AA9 family lytic polysaccharide monooxygenase A from Talaromyces verruculosus (Penicillium verruculosum).